Reading from the N-terminus, the 264-residue chain is 3-methyl-2-oxobutanoate hydroxymethyltransferase (264 aa).

D45 and D84 together coordinate Mg(2+). 3-methyl-2-oxobutanoate-binding positions include D45–S46, D84, and K112. Mg(2+) is bound at residue E114. The Proton acceptor role is filled by E181.

This sequence belongs to the PanB family. In terms of assembly, homodecamer; pentamer of dimers. Mg(2+) serves as cofactor.

The protein localises to the cytoplasm. The enzyme catalyses 3-methyl-2-oxobutanoate + (6R)-5,10-methylene-5,6,7,8-tetrahydrofolate + H2O = 2-dehydropantoate + (6S)-5,6,7,8-tetrahydrofolate. The protein operates within cofactor biosynthesis; (R)-pantothenate biosynthesis; (R)-pantoate from 3-methyl-2-oxobutanoate: step 1/2. Catalyzes the reversible reaction in which hydroxymethyl group from 5,10-methylenetetrahydrofolate is transferred onto alpha-ketoisovalerate to form ketopantoate. The polypeptide is 3-methyl-2-oxobutanoate hydroxymethyltransferase (Shewanella halifaxensis (strain HAW-EB4)).